Here is a 486-residue protein sequence, read N- to C-terminus: N-succinylglutamate 5-semialdehyde dehydrogenase (486 aa).

220 to 225 (GSSRTG) lines the NAD(+) pocket. Active-site residues include E243 and C277.

This sequence belongs to the aldehyde dehydrogenase family. AstD subfamily.

It carries out the reaction N-succinyl-L-glutamate 5-semialdehyde + NAD(+) + H2O = N-succinyl-L-glutamate + NADH + 2 H(+). The protein operates within amino-acid degradation; L-arginine degradation via AST pathway; L-glutamate and succinate from L-arginine: step 4/5. Its function is as follows. Catalyzes the NAD-dependent reduction of succinylglutamate semialdehyde into succinylglutamate. The chain is N-succinylglutamate 5-semialdehyde dehydrogenase from Shewanella piezotolerans (strain WP3 / JCM 13877).